The chain runs to 443 residues: Xaa-Pro dipeptidase (443 aa).

Residues D246, D257, H339, E384, and E423 each contribute to the Mn(2+) site.

The protein belongs to the peptidase M24B family. Bacterial-type prolidase subfamily. It depends on Mn(2+) as a cofactor.

The catalysed reaction is Xaa-L-Pro dipeptide + H2O = an L-alpha-amino acid + L-proline. Splits dipeptides with a prolyl residue in the C-terminal position. This Shigella boydii serotype 18 (strain CDC 3083-94 / BS512) protein is Xaa-Pro dipeptidase.